Reading from the N-terminus, the 419-residue chain is GTPase Obg (419 aa).

The Obg domain occupies 1 to 158; sequence MFVDQARIFV…KWIRLELKLL (158 aa). The OBG-type G domain maps to 159-327; sequence ADVGLVGFPN…LMGKTYALLQ (169 aa). GTP contacts are provided by residues 165-172, 190-194, 212-215, 282-285, and 308-310; these read GFPNAGKS, FTTLV, DIPG, NKMD, and SAV. Residues Ser172 and Thr192 each contribute to the Mg(2+) site. Positions 342–419 constitute an OCT domain; the sequence is RRFEEELPFK…IKDFEFEFTE (78 aa).

The protein belongs to the TRAFAC class OBG-HflX-like GTPase superfamily. OBG GTPase family. Monomer. Mg(2+) is required as a cofactor.

It localises to the cytoplasm. An essential GTPase which binds GTP, GDP and possibly (p)ppGpp with moderate affinity, with high nucleotide exchange rates and a fairly low GTP hydrolysis rate. Plays a role in control of the cell cycle, stress response, ribosome biogenesis and in those bacteria that undergo differentiation, in morphogenesis control. This Syntrophomonas wolfei subsp. wolfei (strain DSM 2245B / Goettingen) protein is GTPase Obg.